Consider the following 176-residue polypeptide: Large ribosomal subunit protein uL6 (176 aa).

The protein belongs to the universal ribosomal protein uL6 family. Part of the 50S ribosomal subunit.

In terms of biological role, this protein binds to the 23S rRNA, and is important in its secondary structure. It is located near the subunit interface in the base of the L7/L12 stalk, and near the tRNA binding site of the peptidyltransferase center. This chain is Large ribosomal subunit protein uL6, found in Paraburkholderia phymatum (strain DSM 17167 / CIP 108236 / LMG 21445 / STM815) (Burkholderia phymatum).